A 186-amino-acid chain; its full sequence is Peptide deformylase (186 aa).

The Fe cation site is built by C113 and H157. E158 is a catalytic residue. A Fe cation-binding site is contributed by H161.

It belongs to the polypeptide deformylase family. Fe(2+) is required as a cofactor.

The enzyme catalyses N-terminal N-formyl-L-methionyl-[peptide] + H2O = N-terminal L-methionyl-[peptide] + formate. Functionally, removes the formyl group from the N-terminal Met of newly synthesized proteins. Requires at least a dipeptide for an efficient rate of reaction. N-terminal L-methionine is a prerequisite for activity but the enzyme has broad specificity at other positions. The polypeptide is Peptide deformylase (Malacoplasma penetrans (strain HF-2) (Mycoplasma penetrans)).